The sequence spans 331 residues: Pantothenate kinase (331 aa).

109-116 (GSVAVGKS) lines the ATP pocket.

This sequence belongs to the prokaryotic pantothenate kinase family.

Its subcellular location is the cytoplasm. It catalyses the reaction (R)-pantothenate + ATP = (R)-4'-phosphopantothenate + ADP + H(+). It participates in cofactor biosynthesis; coenzyme A biosynthesis; CoA from (R)-pantothenate: step 1/5. This Rhizobium johnstonii (strain DSM 114642 / LMG 32736 / 3841) (Rhizobium leguminosarum bv. viciae) protein is Pantothenate kinase.